We begin with the raw amino-acid sequence, 468 residues long: Ribosomal protein uS12 methylthiotransferase RimO (468 aa).

Positions 16-130 (NKIHFISLGC…ILSAIESRES (115 aa)) constitute an MTTase N-terminal domain. Positions 25, 61, 93, 164, 168, and 171 each coordinate [4Fe-4S] cluster. The 233-residue stretch at 150-382 (STPKHYAYLK…SQIQKRNVDK (233 aa)) folds into the Radical SAM core domain. Residues 385-455 (QKLIGEKIEA…GYDLVGRVVK (71 aa)) form the TRAM domain.

This sequence belongs to the methylthiotransferase family. RimO subfamily. The cofactor is [4Fe-4S] cluster.

The protein resides in the cytoplasm. It carries out the reaction L-aspartate(89)-[ribosomal protein uS12]-hydrogen + (sulfur carrier)-SH + AH2 + 2 S-adenosyl-L-methionine = 3-methylsulfanyl-L-aspartate(89)-[ribosomal protein uS12]-hydrogen + (sulfur carrier)-H + 5'-deoxyadenosine + L-methionine + A + S-adenosyl-L-homocysteine + 2 H(+). Functionally, catalyzes the methylthiolation of an aspartic acid residue of ribosomal protein uS12. This chain is Ribosomal protein uS12 methylthiotransferase RimO, found in Chlamydia pneumoniae (Chlamydophila pneumoniae).